A 99-amino-acid polypeptide reads, in one-letter code: Large ribosomal subunit protein uL23 (99 aa).

Belongs to the universal ribosomal protein uL23 family. In terms of assembly, part of the 50S ribosomal subunit. Contacts protein L29, and trigger factor when it is bound to the ribosome.

One of the early assembly proteins it binds 23S rRNA. One of the proteins that surrounds the polypeptide exit tunnel on the outside of the ribosome. Forms the main docking site for trigger factor binding to the ribosome. In Streptococcus suis (strain 98HAH33), this protein is Large ribosomal subunit protein uL23.